Here is a 264-residue protein sequence, read N- to C-terminus: Potassium channel regulatory protein (264 aa).

One can recognise a BTB domain in the interval 5–74 (DLVTLNVGGR…LRNHELLLPS (70 aa)).

Can form homooligomers. Interacts with KCNA1 (via cytoplasmic N-terminal domain) and KCNA4.

The protein localises to the endoplasmic reticulum. In terms of biological role, inhibits potassium fluxes in cells. May regulate Kv1 family channel proteins by retaining a fraction of channels in endomembranes. The protein is Potassium channel regulatory protein (Kcnrg) of Mus musculus (Mouse).